The chain runs to 171 residues: Transcription factor E (171 aa).

Positions 5-91 (DNKAVRGYIQ…LWKLDLDNSV (87 aa)) constitute an HTH TFE/IIEalpha-type domain.

Belongs to the TFE family. Monomer. Interaction with RNA polymerase subunits RpoF and RpoE is necessary for Tfe stimulatory transcription activity. Able to interact with Tbp and RNA polymerase in the absence of DNA promoter. Interacts both with the preinitiation and elongation complexes.

Its function is as follows. Transcription factor that plays a role in the activation of archaeal genes transcribed by RNA polymerase. Facilitates transcription initiation by enhancing TATA-box recognition by TATA-box-binding protein (Tbp), and transcription factor B (Tfb) and RNA polymerase recruitment. Not absolutely required for transcription in vitro, but particularly important in cases where Tbp or Tfb function is not optimal. It dynamically alters the nucleic acid-binding properties of RNA polymerases by stabilizing the initiation complex and destabilizing elongation complexes. Seems to translocate with the RNA polymerase following initiation and acts by binding to the non template strand of the transcription bubble in elongation complexes. The protein is Transcription factor E of Methanocella arvoryzae (strain DSM 22066 / NBRC 105507 / MRE50).